The primary structure comprises 1060 residues: Carbamoyl phosphate synthase large chain (1060 aa).

The interval 1-401 (MPKRTDIRKI…SLLKACRSLE (401 aa)) is carboxyphosphate synthetic domain. ATP contacts are provided by Arg-129, Arg-169, Gly-175, Gly-176, Arg-208, Ile-210, Glu-215, Gly-241, Ile-242, His-243, Gln-284, and Glu-298. An ATP-grasp 1 domain is found at 133 to 327 (KQLMEELNQP…IAKLAAKIAV (195 aa)). Positions 284, 298, and 300 each coordinate Mg(2+). Residues Gln-284, Glu-298, and Asn-300 each coordinate Mn(2+). An oligomerization domain region spans residues 402 to 546 (IGVDHIKIAD…YSTYAVENES (145 aa)). The interval 547–929 (LISDKASILV…ALYKAFEAAY (383 aa)) is carbamoyl phosphate synthetic domain. Positions 671–861 (EATLQALNIP…MAQVATKVIL (191 aa)) constitute an ATP-grasp 2 domain. The ATP site is built by Arg-707, Ala-746, Leu-748, Glu-752, Gly-777, Val-778, His-779, Ser-780, Gln-820, and Glu-832. Residues Gln-820, Glu-832, and Asn-834 each coordinate Mg(2+). 3 residues coordinate Mn(2+): Gln-820, Glu-832, and Asn-834. The MGS-like domain occupies 930 to 1060 (LHMPDYGNIV…SRAFTLKVLD (131 aa)). The tract at residues 930-1060 (LHMPDYGNIV…SRAFTLKVLD (131 aa)) is allosteric domain.

The protein belongs to the CarB family. As to quaternary structure, composed of two chains; the small (or glutamine) chain promotes the hydrolysis of glutamine to ammonia, which is used by the large (or ammonia) chain to synthesize carbamoyl phosphate. Tetramer of heterodimers (alpha,beta)4. Mg(2+) is required as a cofactor. Requires Mn(2+) as cofactor.

The enzyme catalyses hydrogencarbonate + L-glutamine + 2 ATP + H2O = carbamoyl phosphate + L-glutamate + 2 ADP + phosphate + 2 H(+). The catalysed reaction is hydrogencarbonate + NH4(+) + 2 ATP = carbamoyl phosphate + 2 ADP + phosphate + 2 H(+). It participates in amino-acid biosynthesis; L-arginine biosynthesis; carbamoyl phosphate from bicarbonate: step 1/1. The protein operates within pyrimidine metabolism; UMP biosynthesis via de novo pathway; (S)-dihydroorotate from bicarbonate: step 1/3. Its function is as follows. Large subunit of the glutamine-dependent carbamoyl phosphate synthetase (CPSase). CPSase catalyzes the formation of carbamoyl phosphate from the ammonia moiety of glutamine, carbonate, and phosphate donated by ATP, constituting the first step of 2 biosynthetic pathways, one leading to arginine and/or urea and the other to pyrimidine nucleotides. The large subunit (synthetase) binds the substrates ammonia (free or transferred from glutamine from the small subunit), hydrogencarbonate and ATP and carries out an ATP-coupled ligase reaction, activating hydrogencarbonate by forming carboxy phosphate which reacts with ammonia to form carbamoyl phosphate. This Streptococcus agalactiae serotype V (strain ATCC BAA-611 / 2603 V/R) protein is Carbamoyl phosphate synthase large chain.